The sequence spans 464 residues: Antithrombin-III (464 aa).

A signal peptide spans methionine 1–cysteine 32. 2 disulfides stabilise this stretch: cysteine 40–cysteine 160 and cysteine 53–cysteine 127. Residue threonine 63 is modified to Phosphothreonine; by FAM20C. At serine 68 the chain carries Phosphoserine; by FAM20C. Tryptophan 81 is a heparin binding site. The N-linked (GlcNAc...) asparagine glycan is linked to asparagine 128. Arginine 161 contacts heparin. Asparagine 167 carries N-linked (GlcNAc...) asparagine glycosylation. Arginine 177 serves as a coordination point for heparin. Asparagine 187 carries an N-linked (GlcNAc...) (complex) asparagine glycan. N-linked (GlcNAc...) asparagine glycosylation is present at asparagine 224. A disulfide bridge connects residues cysteine 279 and cysteine 462.

It belongs to the serpin family. Forms protease inhibiting heterodimer with TMPRSS7. Post-translationally, phosphorylated by FAM20C in the extracellular medium. In terms of tissue distribution, found in plasma.

It localises to the secreted. The protein resides in the extracellular space. Functionally, most important serine protease inhibitor in plasma that regulates the blood coagulation cascade. AT-III inhibits thrombin, matriptase-3/TMPRSS7, as well as factors IXa, Xa and XIa. Its inhibitory activity is greatly enhanced in the presence of heparin. The protein is Antithrombin-III (SERPINC1) of Homo sapiens (Human).